The following is a 406-amino-acid chain: 26S proteasome regulatory subunit 8 (406 aa).

Ala2 is modified (N-acetylalanine). Ser120 is subject to Phosphoserine. Residues 186–406 (VLLYGPPGTG…KNMSIKKLWK (221 aa)) form a may mediate interaction with PRPF9 region. ATP is bound at residue 190-197 (GPPGTGKT). At Lys222 the chain carries N6-acetyllysine.

This sequence belongs to the AAA ATPase family. In terms of assembly, component of the 19S proteasome regulatory particle complex. The 26S proteasome consists of a 20S core particle (CP) and two 19S regulatory subunits (RP). The regulatory particle is made of a lid composed of 9 subunits, a base containing 6 ATPases including PSMC5 and few additional components. Component of a complex with USP49 and RUVBL1. Interacts with PRPF19. Interacts with TRIM5. Interacts with NDC80. Interacts with PAAF1. Interacts, in vitro, with the thyroid hormone receptor (in a thyroid hormone T3-dependent manner) and with retinoid X receptor (RXR). Interacts with ERCC6.

The protein localises to the cytoplasm. Its subcellular location is the nucleus. Functionally, component of the 26S proteasome, a multiprotein complex involved in the ATP-dependent degradation of ubiquitinated proteins. This complex plays a key role in the maintenance of protein homeostasis by removing misfolded or damaged proteins, which could impair cellular functions, and by removing proteins whose functions are no longer required. Therefore, the proteasome participates in numerous cellular processes, including cell cycle progression, apoptosis, or DNA damage repair. PSMC5 belongs to the heterohexameric ring of AAA (ATPases associated with diverse cellular activities) proteins that unfolds ubiquitinated target proteins that are concurrently translocated into a proteolytic chamber and degraded into peptides. In Bos taurus (Bovine), this protein is 26S proteasome regulatory subunit 8 (PSMC5).